The chain runs to 1209 residues: DNA-directed RNA polymerase subunit beta (1209 aa).

Over residues 1173–1192 the composition is skewed to basic and acidic residues; that stretch reads QQEKKKLAEEAAKKDDKPDE. Residues 1173–1209 form a disordered region; the sequence is QQEKKKLAEEAAKKDDKPDEPVDESDSSTSSDDKVSK.

It belongs to the RNA polymerase beta chain family. The RNAP catalytic core consists of 2 alpha, 1 beta, 1 beta' and 1 omega subunit. When a sigma factor is associated with the core the holoenzyme is formed, which can initiate transcription.

It catalyses the reaction RNA(n) + a ribonucleoside 5'-triphosphate = RNA(n+1) + diphosphate. Its function is as follows. DNA-dependent RNA polymerase catalyzes the transcription of DNA into RNA using the four ribonucleoside triphosphates as substrates. This chain is DNA-directed RNA polymerase subunit beta, found in Lactobacillus johnsonii (strain CNCM I-12250 / La1 / NCC 533).